A 224-amino-acid polypeptide reads, in one-letter code: Orotidine 5'-phosphate decarboxylase (224 aa).

Residues Asp10, Lys32, 59–68, Thr115, Arg175, Gln184, Gly204, and Arg205 contribute to the substrate site; that span reads DLKLHDIPNT. Lys61 functions as the Proton donor in the catalytic mechanism.

It belongs to the OMP decarboxylase family. Type 1 subfamily. In terms of assembly, homodimer.

The catalysed reaction is orotidine 5'-phosphate + H(+) = UMP + CO2. The protein operates within pyrimidine metabolism; UMP biosynthesis via de novo pathway; UMP from orotate: step 2/2. Its function is as follows. Catalyzes the decarboxylation of orotidine 5'-monophosphate (OMP) to uridine 5'-monophosphate (UMP). This chain is Orotidine 5'-phosphate decarboxylase, found in Erythrobacter litoralis (strain HTCC2594).